The sequence spans 266 residues: Glucosamine-6-phosphate deaminase (266 aa).

Asp72 acts as the Proton acceptor; for enolization step in catalysis. Residue Asp141 is the For ring-opening step of the active site. His143 serves as the catalytic Proton acceptor; for ring-opening step. The For ring-opening step role is filled by Glu148.

Belongs to the glucosamine/galactosamine-6-phosphate isomerase family. NagB subfamily. In terms of assembly, homohexamer.

The enzyme catalyses alpha-D-glucosamine 6-phosphate + H2O = beta-D-fructose 6-phosphate + NH4(+). Its pathway is amino-sugar metabolism; N-acetylneuraminate degradation; D-fructose 6-phosphate from N-acetylneuraminate: step 5/5. Its activity is regulated as follows. Allosterically activated by N-acetylglucosamine 6-phosphate (GlcNAc6P). Functionally, catalyzes the reversible isomerization-deamination of glucosamine 6-phosphate (GlcN6P) to form fructose 6-phosphate (Fru6P) and ammonium ion. This Aliivibrio fischeri (strain ATCC 700601 / ES114) (Vibrio fischeri) protein is Glucosamine-6-phosphate deaminase.